The primary structure comprises 150 residues: UPF0756 membrane protein Dd703_1075 (150 aa).

The next 4 helical transmembrane spans lie at 8–28, 51–71, 81–101, and 114–134; these read LLIL…TITL, YGLS…IASG, AFLN…SWLG, and VVAG…GVPV.

The protein belongs to the UPF0756 family.

It is found in the cell membrane. The polypeptide is UPF0756 membrane protein Dd703_1075 (Musicola paradisiaca (strain Ech703) (Dickeya paradisiaca)).